A 118-amino-acid polypeptide reads, in one-letter code: Large ribosomal subunit protein bL20 (118 aa).

It belongs to the bacterial ribosomal protein bL20 family.

Functionally, binds directly to 23S ribosomal RNA and is necessary for the in vitro assembly process of the 50S ribosomal subunit. It is not involved in the protein synthesizing functions of that subunit. The polypeptide is Large ribosomal subunit protein bL20 (Methylibium petroleiphilum (strain ATCC BAA-1232 / LMG 22953 / PM1)).